A 236-amino-acid chain; its full sequence is Sugar fermentation stimulation protein homolog (236 aa).

It belongs to the SfsA family.

The chain is Sugar fermentation stimulation protein homolog from Synechococcus elongatus (strain ATCC 33912 / PCC 7942 / FACHB-805) (Anacystis nidulans R2).